The sequence spans 408 residues: CinA-like protein (408 aa).

It belongs to the CinA family.

The polypeptide is CinA-like protein (Thermotoga sp. (strain RQ2)).